We begin with the raw amino-acid sequence, 158 residues long: Transcriptional regulator MraZ (158 aa).

2 SpoVT-AbrB domains span residues 7–66 (KEQH…EPSV) and 95–138 (LDCV…APEK).

It belongs to the MraZ family. In terms of assembly, forms oligomers.

It is found in the cytoplasm. It localises to the nucleoid. The sequence is that of Transcriptional regulator MraZ from Prosthecochloris aestuarii (strain DSM 271 / SK 413).